Here is a 328-residue protein sequence, read N- to C-terminus: Phosphate acyltransferase (328 aa).

The protein belongs to the PlsX family. As to quaternary structure, homodimer. Probably interacts with PlsY.

The protein localises to the cytoplasm. The catalysed reaction is a fatty acyl-[ACP] + phosphate = an acyl phosphate + holo-[ACP]. It functions in the pathway lipid metabolism; phospholipid metabolism. Its function is as follows. Catalyzes the reversible formation of acyl-phosphate (acyl-PO(4)) from acyl-[acyl-carrier-protein] (acyl-ACP). This enzyme utilizes acyl-ACP as fatty acyl donor, but not acyl-CoA. The chain is Phosphate acyltransferase from Campylobacter jejuni subsp. jejuni serotype O:23/36 (strain 81-176).